The following is a 158-amino-acid chain: 2-C-methyl-D-erythritol 2,4-cyclodiphosphate synthase (158 aa).

2 residues coordinate a divalent metal cation: aspartate 9 and histidine 11. 4-CDP-2-C-methyl-D-erythritol 2-phosphate is bound by residues 9–11 (DVH) and 35–36 (HS). An a divalent metal cation-binding site is contributed by histidine 43. 4-CDP-2-C-methyl-D-erythritol 2-phosphate contacts are provided by residues 57–59 (DIG), 62–66 (FPDTD), 101–107 (AQKPKMA), 133–136 (TTTE), phenylalanine 140, and arginine 143.

It belongs to the IspF family. In terms of assembly, homotrimer. A divalent metal cation is required as a cofactor.

The catalysed reaction is 4-CDP-2-C-methyl-D-erythritol 2-phosphate = 2-C-methyl-D-erythritol 2,4-cyclic diphosphate + CMP. Its pathway is isoprenoid biosynthesis; isopentenyl diphosphate biosynthesis via DXP pathway; isopentenyl diphosphate from 1-deoxy-D-xylulose 5-phosphate: step 4/6. In terms of biological role, involved in the biosynthesis of isopentenyl diphosphate (IPP) and dimethylallyl diphosphate (DMAPP), two major building blocks of isoprenoid compounds. Catalyzes the conversion of 4-diphosphocytidyl-2-C-methyl-D-erythritol 2-phosphate (CDP-ME2P) to 2-C-methyl-D-erythritol 2,4-cyclodiphosphate (ME-CPP) with a corresponding release of cytidine 5-monophosphate (CMP). The sequence is that of 2-C-methyl-D-erythritol 2,4-cyclodiphosphate synthase from Bacillus cereus (strain ATCC 10987 / NRS 248).